The following is a 322-amino-acid chain: Pre-mRNA-splicing factor NTR2 (322 aa).

Residues 1 to 30 are disordered; that stretch reads MAIKKRNKIRLPSGSPEEVGIDGSAHKPMQ. Position 40 is a phosphoserine (serine 40). The segment at 113 to 137 is disordered; the sequence is LLSDSSEAGSSSEGEHISSIPTRGE. The span at 115–132 shows a compositional bias: low complexity; that stretch reads SDSSEAGSSSEGEHISSI. Phosphoserine occurs at positions 153 and 197.

As to quaternary structure, component of the NTR complex (NTC-related complex), composed of NTR1, NTR2 and PRP43. Interacts with CLF1, NTR1 and PRP43.

It localises to the cytoplasm. The protein localises to the nucleus. In terms of biological role, involved in pre-mRNA splicing and spliceosome disassembly. Promotes release of excised lariat intron from the spliceosome by acting as a receptor for PRP43. This targeting of PRP43 leads to disassembly of the spliceosome with the separation of the U2, U5, U6 snRNPs and the NTC complex. The chain is Pre-mRNA-splicing factor NTR2 (NTR2) from Saccharomyces cerevisiae (strain ATCC 204508 / S288c) (Baker's yeast).